Here is a 126-residue protein sequence, read N- to C-terminus: Fluoride-specific ion channel FluC (126 aa).

4 helical membrane passes run 3-23 (MILA…LTGV), 39-59 (TVNV…AHVW), 71-91 (VGVL…ALLV), and 101-121 (AYVA…LALI). Residues Gly75 and Thr78 each coordinate Na(+).

Belongs to the fluoride channel Fluc/FEX (TC 1.A.43) family.

Its subcellular location is the cell inner membrane. The enzyme catalyses fluoride(in) = fluoride(out). Its activity is regulated as follows. Na(+) is not transported, but it plays an essential structural role and its presence is essential for fluoride channel function. Fluoride-specific ion channel. Important for reducing fluoride concentration in the cell, thus reducing its toxicity. The protein is Fluoride-specific ion channel FluC of Rhodospirillum centenum (strain ATCC 51521 / SW).